A 467-amino-acid polypeptide reads, in one-letter code: ATP synthase subunit beta (467 aa).

Residue Gly-150 to Thr-157 coordinates ATP.

It belongs to the ATPase alpha/beta chains family. F-type ATPases have 2 components, CF(1) - the catalytic core - and CF(0) - the membrane proton channel. CF(1) has five subunits: alpha(3), beta(3), gamma(1), delta(1), epsilon(1). CF(0) has three main subunits: a(1), b(2) and c(9-12). The alpha and beta chains form an alternating ring which encloses part of the gamma chain. CF(1) is attached to CF(0) by a central stalk formed by the gamma and epsilon chains, while a peripheral stalk is formed by the delta and b chains.

Its subcellular location is the cell inner membrane. The enzyme catalyses ATP + H2O + 4 H(+)(in) = ADP + phosphate + 5 H(+)(out). Its function is as follows. Produces ATP from ADP in the presence of a proton gradient across the membrane. The catalytic sites are hosted primarily by the beta subunits. The protein is ATP synthase subunit beta of Vibrio cholerae serotype O1 (strain ATCC 39541 / Classical Ogawa 395 / O395).